Here is a 515-residue protein sequence, read N- to C-terminus: Bifunctional purine biosynthesis protein PurH (515 aa).

Positions 1-145 (MTKRALISVS…KNHASVTVVV (145 aa)) constitute an MGS-like domain.

This sequence belongs to the PurH family.

The enzyme catalyses (6R)-10-formyltetrahydrofolate + 5-amino-1-(5-phospho-beta-D-ribosyl)imidazole-4-carboxamide = 5-formamido-1-(5-phospho-D-ribosyl)imidazole-4-carboxamide + (6S)-5,6,7,8-tetrahydrofolate. It catalyses the reaction IMP + H2O = 5-formamido-1-(5-phospho-D-ribosyl)imidazole-4-carboxamide. It functions in the pathway purine metabolism; IMP biosynthesis via de novo pathway; 5-formamido-1-(5-phospho-D-ribosyl)imidazole-4-carboxamide from 5-amino-1-(5-phospho-D-ribosyl)imidazole-4-carboxamide (10-formyl THF route): step 1/1. It participates in purine metabolism; IMP biosynthesis via de novo pathway; IMP from 5-formamido-1-(5-phospho-D-ribosyl)imidazole-4-carboxamide: step 1/1. The polypeptide is Bifunctional purine biosynthesis protein PurH (Streptococcus suis).